Here is a 187-residue protein sequence, read N- to C-terminus: Ribosome-recycling factor (187 aa).

Belongs to the RRF family.

Its subcellular location is the cytoplasm. Responsible for the release of ribosomes from messenger RNA at the termination of protein biosynthesis. May increase the efficiency of translation by recycling ribosomes from one round of translation to another. The polypeptide is Ribosome-recycling factor (Petrotoga mobilis (strain DSM 10674 / SJ95)).